The following is a 113-amino-acid chain: Cholecystoxin (113 aa).

A signal peptide spans 1-20 (MYGGICLCVLLAVLAISSSG). A propeptide spanning residues 21-79 (QHISRSLNGNSLAAAIEQNFPEKHRPARTPDSNQRVESNIDEKANLGVLLARYLQKARR) is cleaved from the precursor. The interval 77 to 97 (ARRGTNGKPPDPKKESQDYLG) is disordered. Y95 bears the Sulfotyrosine mark. F101 bears the Phenylalanine amide mark. Residues 102-113 (GRRSAEEYEYSS) constitute a propeptide that is removed on maturation.

It belongs to the gastrin/cholecystokinin family. As to expression, expressed by the mandibular venom gland.

The protein resides in the secreted. Functionally, cholecystokinin-22: hypotensive neuropeptide that binds cholecystokinin receptor type A receptor (CCKAR). Cholecystokinin-8: hypotensive neuropeptide that binds cholecystokinin receptor type A receptor (CCKAR). The sequence is that of Cholecystoxin from Varanus varius (Lace monitor lizard).